The sequence spans 340 residues: Alcohol dehydrogenase patD (340 aa).

Residue C46 participates in Zn(2+) binding. H47 is a binding site for NAD(+). Zn(2+) is bound by residues H67, E68, C101, C104, C112, and C154. Position 67 (H67) interacts with substrate. Residues G178–G183, V198–D203, K206, L265–I267, P289–G291, and E297–A299 each bind NAD(+).

The protein belongs to the zinc-containing alcohol dehydrogenase family. It depends on Zn(2+) as a cofactor.

It is found in the cytoplasm. The protein localises to the cytosol. It catalyses the reaction neopatulin + NADPH + H(+) = (E)-ascladiol + NADP(+). Its pathway is mycotoxin biosynthesis; patulin biosynthesis. Alcohol dehydrogenase; part of the gene cluster that mediates the biosynthesis of patulin, an acetate-derived tetraketide mycotoxin produced by several fungal species that shows antimicrobial properties against several bacteria. PatD catalyzes the conversion of neopatulin into E-ascladiol. The pathway begins with the synthesis of 6-methylsalicylic acid by the polyketide synthase (PKS) patK via condensation of acetate and malonate units. The 6-methylsalicylic acid decarboxylase patG then catalyzes the decarboxylation of 6-methylsalicylic acid to yield m-cresol (also known as 3-methylphenol). These first reactions occur in the cytosol. The intermediate m-cresol is then transported into the endoplasmic reticulum where the cytochrome P450 monooxygenase patH converts it to m-hydroxybenzyl alcohol, which is further converted to gentisyl alcohol by the cytochrome P450 monooxygenase patI. The oxidoreductases patJ and patO further convert gentisyl alcohol to isoepoxydon in the vacuole. PatN catalyzes then the transformation of isoepoxydon into phyllostine. The cluster protein patF is responsible for the conversion from phyllostine to neopatulin whereas the alcohol dehydrogenase patD converts neopatulin to E-ascladiol. The steps between isoepoxydon and E-ascladiol occur in the cytosol, and E-ascladiol is probably secreted to the extracellular space by one of the cluster-specific transporters patC or patM. Finally, the secreted patulin synthase patE catalyzes the conversion of E-ascladiol to patulin. In Penicillium expansum (Blue mold rot fungus), this protein is Alcohol dehydrogenase patD.